A 565-amino-acid chain; its full sequence is NAD-dependent malic enzyme (565 aa).

The active-site Proton donor is Tyr-104. Arg-157 contacts NAD(+). Lys-175 acts as the Proton acceptor in catalysis. Residues Glu-246, Asp-247, and Asp-270 each coordinate a divalent metal cation. Positions 270 and 418 each coordinate NAD(+).

Belongs to the malic enzymes family. Homotetramer. Mg(2+) serves as cofactor. It depends on Mn(2+) as a cofactor.

It carries out the reaction (S)-malate + NAD(+) = pyruvate + CO2 + NADH. It catalyses the reaction oxaloacetate + H(+) = pyruvate + CO2. This Salmonella dublin (strain CT_02021853) protein is NAD-dependent malic enzyme.